The chain runs to 246 residues: Biosynthetic peptidoglycan transglycosylase (246 aa).

Residues 20–42 (SLRWVLAAPLLFAAASVLQVLAL) form a helical membrane-spanning segment.

It belongs to the glycosyltransferase 51 family.

The protein resides in the cell inner membrane. It carries out the reaction [GlcNAc-(1-&gt;4)-Mur2Ac(oyl-L-Ala-gamma-D-Glu-L-Lys-D-Ala-D-Ala)](n)-di-trans,octa-cis-undecaprenyl diphosphate + beta-D-GlcNAc-(1-&gt;4)-Mur2Ac(oyl-L-Ala-gamma-D-Glu-L-Lys-D-Ala-D-Ala)-di-trans,octa-cis-undecaprenyl diphosphate = [GlcNAc-(1-&gt;4)-Mur2Ac(oyl-L-Ala-gamma-D-Glu-L-Lys-D-Ala-D-Ala)](n+1)-di-trans,octa-cis-undecaprenyl diphosphate + di-trans,octa-cis-undecaprenyl diphosphate + H(+). The protein operates within cell wall biogenesis; peptidoglycan biosynthesis. Its function is as follows. Peptidoglycan polymerase that catalyzes glycan chain elongation from lipid-linked precursors. This Xanthomonas campestris pv. campestris (strain 8004) protein is Biosynthetic peptidoglycan transglycosylase.